The chain runs to 118 residues: Ribonuclease P protein component (118 aa).

This sequence belongs to the RnpA family. As to quaternary structure, consists of a catalytic RNA component (M1 or rnpB) and a protein subunit.

It catalyses the reaction Endonucleolytic cleavage of RNA, removing 5'-extranucleotides from tRNA precursor.. In terms of biological role, RNaseP catalyzes the removal of the 5'-leader sequence from pre-tRNA to produce the mature 5'-terminus. It can also cleave other RNA substrates such as 4.5S RNA. The protein component plays an auxiliary but essential role in vivo by binding to the 5'-leader sequence and broadening the substrate specificity of the ribozyme. The chain is Ribonuclease P protein component from Bifidobacterium animalis subsp. lactis (strain AD011).